A 698-amino-acid chain; its full sequence is Endogenous retrovirus group K member 21 Env polyprotein (698 aa).

A disordered region spans residues 1–25; the sequence is MHPSEMQRKAPPRRRRHRNRAPLTH. The N-terminal stretch at 1–88 is a signal peptide; sequence MHPSEMQRKA…ALMIVSMVVS (88 aa). The span at 10 to 20 shows a compositional bias: basic residues; the sequence is APPRRRRHRNR. The Extracellular portion of the chain corresponds to 89–631; the sequence is LPMPAGAAAA…NLNPVTWVKT (543 aa). N-linked (GlcNAc...) asparagine glycosylation is found at Asn-99, Asn-127, Asn-152, Asn-273, Asn-354, Asn-371, and Asn-460. The segment at 465 to 485 is fusion peptide; that stretch reads FIFTLIAVIMGLIAVTAMAAV. N-linked (GlcNAc...) asparagine glycosylation is found at Asn-506, Asn-553, Asn-565, and Asn-584. Residues 632 to 652 form a helical membrane-spanning segment; it reads IGSTTIINLILILVCLFCLLL. Over 653–698 the chain is Cytoplasmic; that stretch reads VCRCTQQLRRDSDHRERAMMTMVVLSKRKGGNVGKSKRDQIVTVSV.

This sequence belongs to the beta type-B retroviral envelope protein family. HERV class-II K(HML-2) env subfamily. The surface (SU) and transmembrane (TM) proteins form a heterodimer. SU and TM are attached by noncovalent interactions or by a labile interchain disulfide bond. Post-translationally, specific enzymatic cleavages in vivo yield the mature SU and TM proteins.

The protein resides in the cell membrane. Its subcellular location is the virion. Its function is as follows. Retroviral envelope proteins mediate receptor recognition and membrane fusion during early infection. Endogenous envelope proteins may have kept, lost or modified their original function during evolution. This endogenous envelope protein has lost its original fusogenic properties. SU mediates receptor recognition. In terms of biological role, TM anchors the envelope heterodimer to the viral membrane through one transmembrane domain. The other hydrophobic domain, called fusion peptide, mediates fusion of the viral membrane with the target cell membrane. This Homo sapiens (Human) protein is Endogenous retrovirus group K member 21 Env polyprotein (ERVK-21).